The sequence spans 164 residues: Ribosome-binding factor A (164 aa).

Belongs to the RbfA family. In terms of assembly, monomer. Binds 30S ribosomal subunits, but not 50S ribosomal subunits or 70S ribosomes.

The protein localises to the cytoplasm. Functionally, one of several proteins that assist in the late maturation steps of the functional core of the 30S ribosomal subunit. Associates with free 30S ribosomal subunits (but not with 30S subunits that are part of 70S ribosomes or polysomes). Required for efficient processing of 16S rRNA. May interact with the 5'-terminal helix region of 16S rRNA. This is Ribosome-binding factor A from Mycobacterium leprae (strain Br4923).